The following is a 245-amino-acid chain: Ribonuclease PH (245 aa).

Residues arginine 86 and 124 to 126 contribute to the phosphate site; that span reads GTR.

It belongs to the RNase PH family. Homohexameric ring arranged as a trimer of dimers.

It catalyses the reaction tRNA(n+1) + phosphate = tRNA(n) + a ribonucleoside 5'-diphosphate. Functionally, phosphorolytic 3'-5' exoribonuclease that plays an important role in tRNA 3'-end maturation. Removes nucleotide residues following the 3'-CCA terminus of tRNAs; can also add nucleotides to the ends of RNA molecules by using nucleoside diphosphates as substrates, but this may not be physiologically important. Probably plays a role in initiation of 16S rRNA degradation (leading to ribosome degradation) during starvation. The sequence is that of Ribonuclease PH from Bacillus velezensis (strain DSM 23117 / BGSC 10A6 / LMG 26770 / FZB42) (Bacillus amyloliquefaciens subsp. plantarum).